We begin with the raw amino-acid sequence, 137 residues long: Putative pre-16S rRNA nuclease (137 aa).

This sequence belongs to the YqgF nuclease family.

The protein localises to the cytoplasm. Could be a nuclease involved in processing of the 5'-end of pre-16S rRNA. In Anaeromyxobacter dehalogenans (strain 2CP-C), this protein is Putative pre-16S rRNA nuclease.